Reading from the N-terminus, the 102-residue chain is NADH-quinone oxidoreductase subunit K 1 (102 aa).

The next 3 membrane-spanning stretches (helical) occupy residues 6–26, 31–51, and 65–85; these read LNAYVALSAVLFALGGIGVLV, LAILMCIELMLNAANLLFVAF, and FLVITVAAAEVAIGLALTVLL.

This sequence belongs to the complex I subunit 4L family. As to quaternary structure, NDH-1 is composed of 14 different subunits. Subunits NuoA, H, J, K, L, M, N constitute the membrane sector of the complex.

It localises to the cell membrane. It catalyses the reaction a quinone + NADH + 5 H(+)(in) = a quinol + NAD(+) + 4 H(+)(out). Functionally, NDH-1 shuttles electrons from NADH, via FMN and iron-sulfur (Fe-S) centers, to quinones in the respiratory chain. The immediate electron acceptor for the enzyme in this species is believed to be a menaquinone. Couples the redox reaction to proton translocation (for every two electrons transferred, four hydrogen ions are translocated across the cytoplasmic membrane), and thus conserves the redox energy in a proton gradient. This is NADH-quinone oxidoreductase subunit K 1 from Symbiobacterium thermophilum (strain DSM 24528 / JCM 14929 / IAM 14863 / T).